Consider the following 143-residue polypeptide: Ayaconin (143 aa).

An N-terminal signal peptide occupies residues 1-22; it reads MSFLFFLVVLISIGLWVGPCVA.

As to quaternary structure, interacts with human F12 (inactive). Salivary gland.

Its subcellular location is the secreted. Its function is as follows. Inhibits the intrinsic blood coagulation pathway in the host by blocking activation of host coagulation factor XII (F12). This chain is Ayaconin, found in Lutzomyia ayacuchensis (Sand fly).